The chain runs to 316 residues: 4-hydroxy-3-methylbut-2-enyl diphosphate reductase (316 aa).

Cysteine 12 contributes to the [4Fe-4S] cluster binding site. Residues histidine 41 and histidine 74 each contribute to the (2E)-4-hydroxy-3-methylbut-2-enyl diphosphate site. Dimethylallyl diphosphate contacts are provided by histidine 41 and histidine 74. 2 residues coordinate isopentenyl diphosphate: histidine 41 and histidine 74. Cysteine 96 lines the [4Fe-4S] cluster pocket. Histidine 124 lines the (2E)-4-hydroxy-3-methylbut-2-enyl diphosphate pocket. Histidine 124 contacts dimethylallyl diphosphate. Residue histidine 124 coordinates isopentenyl diphosphate. Glutamate 126 acts as the Proton donor in catalysis. Threonine 169 contacts (2E)-4-hydroxy-3-methylbut-2-enyl diphosphate. A [4Fe-4S] cluster-binding site is contributed by cysteine 199. The (2E)-4-hydroxy-3-methylbut-2-enyl diphosphate site is built by serine 227, serine 228, asparagine 229, and serine 271. 4 residues coordinate dimethylallyl diphosphate: serine 227, serine 228, asparagine 229, and serine 271. Residues serine 227, serine 228, asparagine 229, and serine 271 each coordinate isopentenyl diphosphate.

It belongs to the IspH family. The cofactor is [4Fe-4S] cluster.

It carries out the reaction isopentenyl diphosphate + 2 oxidized [2Fe-2S]-[ferredoxin] + H2O = (2E)-4-hydroxy-3-methylbut-2-enyl diphosphate + 2 reduced [2Fe-2S]-[ferredoxin] + 2 H(+). The catalysed reaction is dimethylallyl diphosphate + 2 oxidized [2Fe-2S]-[ferredoxin] + H2O = (2E)-4-hydroxy-3-methylbut-2-enyl diphosphate + 2 reduced [2Fe-2S]-[ferredoxin] + 2 H(+). It functions in the pathway isoprenoid biosynthesis; dimethylallyl diphosphate biosynthesis; dimethylallyl diphosphate from (2E)-4-hydroxy-3-methylbutenyl diphosphate: step 1/1. Its pathway is isoprenoid biosynthesis; isopentenyl diphosphate biosynthesis via DXP pathway; isopentenyl diphosphate from 1-deoxy-D-xylulose 5-phosphate: step 6/6. In terms of biological role, catalyzes the conversion of 1-hydroxy-2-methyl-2-(E)-butenyl 4-diphosphate (HMBPP) into a mixture of isopentenyl diphosphate (IPP) and dimethylallyl diphosphate (DMAPP). Acts in the terminal step of the DOXP/MEP pathway for isoprenoid precursor biosynthesis. The polypeptide is 4-hydroxy-3-methylbut-2-enyl diphosphate reductase (Vibrio cholerae serotype O1 (strain ATCC 39315 / El Tor Inaba N16961)).